The sequence spans 283 residues: Transmembrane protein 45B (283 aa).

Helical transmembrane passes span 7-27, 55-75, 99-119, 121-141, 153-173, 187-207, and 218-238; these read HALP…KCPF, LIEG…EQFV, MYLF…SHHV, VGLD…LFYF, IHSL…MEVF, LAIL…PLSG, and IMFI…IVGI. A disordered region spans residues 261-283; that stretch reads GLRKSTSTDSSSQKALLQESDEE. The segment covering 264–275 has biased composition (polar residues); that stretch reads KSTSTDSSSQKA.

This sequence belongs to the TMEM45 family.

It localises to the membrane. In Danio rerio (Zebrafish), this protein is Transmembrane protein 45B (tmem45b).